A 206-amino-acid polypeptide reads, in one-letter code: Macrophage immunometabolism regulator (206 aa).

Met1 carries the N-acetylmethionine modification. A disordered region spans residues 1 to 41 (MEVDINGESRSTLTTLPFPGAEANSPGKAEAEKPRCSSTPC). Ser25, Ser140, and Ser167 each carry phosphoserine.

The protein belongs to the UNC119-binding protein family. As to quaternary structure, interacts with UNC119 and UNC119B; interaction preferentially takes place when UNC119 and UNC119B are unliganded with myristoylated proteins.

It localises to the cytoplasm. The protein resides in the cell projection. The protein localises to the cilium. In terms of biological role, regulates the macrophage function, by enhancing the resolution of inflammation and wound repair functions mediated by M2 macrophages. The regulation of macrophage function is, due at least in part, to its ability to inhibit glycolysis. May also play a role in trafficking of proteins via its interaction with UNC119 and UNC119B cargo adapters: may help the release of UNC119 and UNC119B cargo or the recycling of UNC119 and UNC119B. May play a role in ciliary membrane localization via its interaction with UNC119B and protein transport into photoreceptor cells. The protein is Macrophage immunometabolism regulator (MACIR) of Pongo abelii (Sumatran orangutan).